Reading from the N-terminus, the 312-residue chain is Cytochrome c biogenesis protein CcsA (312 aa).

Helical transmembrane passes span 18–38, 48–68, 73–93, 102–122, 148–168, 216–236, 250–267, and 279–299; these read LGILIFYFLLINLPISLLALF, FFTILINLFIALQLIFRWILS, ISNLYESLYFLVWGISLGQLL, IIPVIAIPIELLTIAFACFVL, VMLSYAALIIGSLLSASVLFI, SILVGFVLLTLGLITGAIWAN, TWAFISWLFYAAYLHMRI, and FATSGFFVVLICYLGVNFLGI.

Belongs to the CcmF/CycK/Ccl1/NrfE/CcsA family. In terms of assembly, may interact with ccs1.

It is found in the cellular thylakoid membrane. Its function is as follows. Required during biogenesis of c-type cytochromes (cytochrome c6 and cytochrome f) at the step of heme attachment. This is Cytochrome c biogenesis protein CcsA from Prochlorococcus marinus (strain MIT 9515).